Here is a 728-residue protein sequence, read N- to C-terminus: 1,4-alpha-glucan branching enzyme GlgB (728 aa).

Asp-405 (nucleophile) is an active-site residue. Glu-458 acts as the Proton donor in catalysis.

Belongs to the glycosyl hydrolase 13 family. GlgB subfamily. In terms of assembly, monomer.

The catalysed reaction is Transfers a segment of a (1-&gt;4)-alpha-D-glucan chain to a primary hydroxy group in a similar glucan chain.. It participates in glycan biosynthesis; glycogen biosynthesis. In terms of biological role, catalyzes the formation of the alpha-1,6-glucosidic linkages in glycogen by scission of a 1,4-alpha-linked oligosaccharide from growing alpha-1,4-glucan chains and the subsequent attachment of the oligosaccharide to the alpha-1,6 position. This chain is 1,4-alpha-glucan branching enzyme GlgB, found in Shigella flexneri.